The sequence spans 497 residues: Delayed-rectifier potassium channel regulatory subunit KCNS1 (497 aa).

At 1–186 the chain is on the cytoplasmic side; that stretch reads MVSEFPGPGS…LTMENPGYSL (186 aa). Residues 187–208 traverse the membrane as a helical segment; that stretch reads PSKLFSCVSIGVVLASIAAMCI. Over 209-239 the chain is Extracellular; sequence HSLPEYQAREAAAAVAAVAAGRSAEEVRDDP. A helical membrane pass occupies residues 240–262; sequence VLRRLEYFCIAWFSFEVSSRLLL. Over 263 to 273 the chain is Cytoplasmic; that stretch reads APSTRNFFCHP. The chain crosses the membrane as a helical span at residues 274–291; sequence LNLIDIVSVLPFYLTLLA. The Extracellular segment spans residues 292-309; the sequence is GAALGDQRGASGEELGDL. Residues 310–330 form a helical; Voltage-sensor membrane-spanning segment; it reads GKVVQVFRLMRIFRVLKLARH. Over 331–345 the chain is Cytoplasmic; the sequence is STGLRSLGATLKHSY. Residues 346-367 traverse the membrane as a helical segment; the sequence is REVGILLLYLAVGVSVFSGVAY. The Extracellular portion of the chain corresponds to 368–379; that stretch reads TAEEENEGFHTI. The helical intramembrane region spans 380-391; it reads PACWWWGTVSMT. The Selectivity filter signature appears at 392–397; sequence TVGYGD. Residues 392–399 lie within the membrane without spanning it; sequence TVGYGDVV. Residues 400–406 lie on the Extracellular side of the membrane; that stretch reads PETVGGK. A helical membrane pass occupies residues 407 to 435; it reads LAASGCILGGILVVALPITIIFNKFSHFY. Residues 436–497 are Cytoplasmic-facing; sequence RRQKALEAAV…PREPAKSHSY (62 aa). Residues 464 to 497 are disordered; it reads SDVSLETSRDTSQEGRSTDLETQAPREPAKSHSY. Basic and acidic residues predominate over residues 470-482; it reads TSRDTSQEGRSTD.

The protein belongs to the potassium channel family. S (TC 1.A.1.2) subfamily. Kv9.1/KCNS1 sub-subfamily. In terms of assembly, heterotetramer with KCNB1 and KCNB2. Does not form homomultimers. In terms of tissue distribution, detected in brain, but not in the other tissues tested. The highest levels of expression are in olfactory bulb, cerebral cortex, hippocampus, habenula, basolateral amygdaloid nuclei and cerebellum.

It is found in the cell membrane. In terms of biological role, potassium channel regulatory subunit that modulate the delayed rectifier voltage-gated potassium channel activity of KCNB1 and KCNB2 by altering their kinetics, expression levels, and shifting the half-inactivation potential to more polarized values. While it does not form functional channels on its own, it can form functional heterotetrameric channels with KCNB1 and KCNB2. Each regulatory subunit has unique regulatory properties that can lead to extensive inhibition, significant changes in kinetics, and/or substantial shifts in the voltage dependencies of the inactivation process. This is Delayed-rectifier potassium channel regulatory subunit KCNS1 from Mus musculus (Mouse).